Here is a 349-residue protein sequence, read N- to C-terminus: Protein-glutamate methylesterase/protein-glutamine glutaminase (349 aa).

The 118-residue stretch at 5–122 folds into the Response regulatory domain; it reads RVLSVDDSAL…REGMLAYSEM (118 aa). Asp56 bears the 4-aspartylphosphate mark. The CheB-type methylesterase domain maps to 152–344; it reads LLSSEKLIAI…QQMLAKISAG (193 aa). Catalysis depends on residues Ser164, His190, and Asp286.

Belongs to the CheB family. Post-translationally, phosphorylated by CheA. Phosphorylation of the N-terminal regulatory domain activates the methylesterase activity.

The protein localises to the cytoplasm. The catalysed reaction is [protein]-L-glutamate 5-O-methyl ester + H2O = L-glutamyl-[protein] + methanol + H(+). It carries out the reaction L-glutaminyl-[protein] + H2O = L-glutamyl-[protein] + NH4(+). Functionally, involved in chemotaxis. Part of a chemotaxis signal transduction system that modulates chemotaxis in response to various stimuli. Catalyzes the demethylation of specific methylglutamate residues introduced into the chemoreceptors (methyl-accepting chemotaxis proteins or MCP) by CheR. Also mediates the irreversible deamidation of specific glutamine residues to glutamic acid. This chain is Protein-glutamate methylesterase/protein-glutamine glutaminase, found in Escherichia coli O157:H7.